The primary structure comprises 852 residues: Vacuolar protein sorting-associated protein 16 homolog (852 aa).

Belongs to the VPS16 family. As to quaternary structure, probable core component of at least two putative endosomal tethering complexes, the homotypic fusion and vacuole protein sorting (HOPS) complex and the class C core vacuole/endosome tethering (CORVET) complex. Their common core is composed of the class C Vps proteins vps-11, vps-16 and vps-18, which in HOPS further associates with vps-33.1, vps-39 and vps-41 and in CORVET with vps-8 and vps-33.2.

The protein resides in the late endosome membrane. It is found in the lysosome membrane. Functionally, plays a role in vesicle-mediated protein trafficking to lysosomal compartments including the endocytic membrane transport pathways. Believed to act as a core component of the putative HOPS and CORVET endosomal tethering complexes which are proposed to be involved in the rab-5-to-rab-7 endosome conversion probably implicating sand-1, and via binding SNAREs and SNARE complexes to mediate tethering and docking events during SNARE-mediated membrane fusion. The HOPS complex is proposed to be recruited to rab-7 on the late endosomal membrane and to regulate late endocytic, phagocytic and autophagic traffic towards lysosomes. Within the HOPS complex, contributes to the normal development of gut granules in the adult intestine. The CORVET complex is proposed to function as a rab-5 effector to mediate early endosome fusion probably in specific endosome subpopulations. Required for recruitment of vps-33.1 to the HOPS complex. Required for fusion of endosomes and autophagosomes with lysosomes; the function is dependent on its association with vps-33.1 but not vps-33.2. In Caenorhabditis elegans, this protein is Vacuolar protein sorting-associated protein 16 homolog.